The sequence spans 145 residues: uncharacterized protein (145 aa).

Residues 1-59 (MSTGTPHYAADRSKSRKSNNNRSIPFRTPTTQKVVKTSIRLGPVNPPTPTRNTQGGHGF) form a disordered region.

This is an uncharacterized protein from Caenorhabditis elegans.